We begin with the raw amino-acid sequence, 311 residues long: Probable acetylxylan esterase A (311 aa).

The first 19 residues, 1–19 (MAPFSFILTVLLYALTCSA), serve as a signal peptide directing secretion. Ser-153 functions as the Charge relay system in the catalytic mechanism. Residues Asn-197 and Asn-224 are each glycosylated (N-linked (GlcNAc...) asparagine).

This sequence belongs to the carbohydrate esterase 1 (CE1) family. AxeA subfamily. As to quaternary structure, monomer.

Its subcellular location is the secreted. It catalyses the reaction Deacetylation of xylans and xylo-oligosaccharides.. It participates in glycan degradation; xylan degradation. Acetylxylan esterase involved in the hydrolysis of xylan, a major structural heterogeneous polysaccharide found in plant biomass representing the second most abundant polysaccharide in the biosphere, after cellulose. Degrades acetylated xylans by cleaving acetyl side groups from the hetero-xylan backbone. The sequence is that of Probable acetylxylan esterase A (axeA) from Aspergillus terreus (strain NIH 2624 / FGSC A1156).